The chain runs to 350 residues: Paired box protein Pax-4 (350 aa).

Positions 5 to 131 (GISSMNQLGG…SSINRVLRAL (127 aa)) form a DNA-binding region, paired. Residues 8–64 (SMNQLGGLFVNGRPLPLDTRQQIVRLAVSGMRPCDISRILKVSNGCVSKILGRYYRT) form a PAI subdomain region. The RED subdomain stretch occupies residues 83–131 (PVVARIAQLKGECPALFAWEIQRQLCAEGLCTQDKTPSVSSINRVLRAL). A disordered region spans residues 153 to 172 (LTPHSGSETPRGTHPGTGHR). The segment at residues 170–229 (GHRNRTIFSPSQAEALEKEFQRGQYPDSVARGKLATATSLPEDTVRVWFSNRRAKWRRQE) is a DNA-binding region (homeobox). Residues 278 to 350 (CYQLCWATAP…ATPTHFSHWP (73 aa)) form a transcription repression region.

This sequence belongs to the paired homeobox family.

The protein resides in the nucleus. Its function is as follows. Plays an important role in the differentiation and development of pancreatic islet beta cells. Transcriptional repressor that binds to a common element in the glucagon, insulin and somatostatin promoters. Competes with PAX6 for this same promoter binding site. Isoform 2 appears to be a dominant negative form antagonizing PAX4 transcriptional activity. This is Paired box protein Pax-4 (PAX4) from Homo sapiens (Human).